Here is a 67-residue protein sequence, read N- to C-terminus: Small ribosomal subunit protein bS21 (67 aa).

It belongs to the bacterial ribosomal protein bS21 family.

This chain is Small ribosomal subunit protein bS21 (rpsU), found in Aquifex aeolicus (strain VF5).